The following is a 78-amino-acid chain: LYR motif-containing protein 9 (78 aa).

Belongs to the complex I LYR family. LYRM9 subfamily.

This is LYR motif-containing protein 9 (lyrm9) from Danio rerio (Zebrafish).